The following is a 491-amino-acid chain: Trigger factor (491 aa).

The region spanning 169–254 (GDRVTIDYLG…VKDVAAAAPI (86 aa)) is the PPIase FKBP-type domain. Positions 434 to 491 (KVSKEELTAEDDADEKPAKKTASKKKAAAKADAAEGEEAAAPKRKAPAKKKASDESAE) are disordered. A compositionally biased stretch (basic residues) spans 452–461 (KKTASKKKAA).

The protein belongs to the FKBP-type PPIase family. Tig subfamily.

Its subcellular location is the cytoplasm. The enzyme catalyses [protein]-peptidylproline (omega=180) = [protein]-peptidylproline (omega=0). Involved in protein export. Acts as a chaperone by maintaining the newly synthesized protein in an open conformation. Functions as a peptidyl-prolyl cis-trans isomerase. The protein is Trigger factor of Sinorhizobium medicae (strain WSM419) (Ensifer medicae).